Reading from the N-terminus, the 305-residue chain is MQKYDIKTFQGMILALQDYWAQQGCTIVQPLDMEVGAGTSHPMTCLRALGPEPIATAYVQPSRRPTDGRYGENPNRLQHYYQFQVIIKPSPDNIQELYLGSLRVLGVDPCVHDIRFVEDNWENPTLGAWGLGWEVWLNGMEVTQFTYFQQVGGLECKPVTGEITYGIERLAMYIQGVDSVYDLVWTDGPLGKVTYGDIFHQNEVEQSTYNFEHADVDFLFTYFDQCEKECKYLLELEKPLPLPAYERILKAAHAFNLLDARKAISVTERQRYILRIRNLTKSVAEAYYASREALGFPMCKKSEQK.

Belongs to the class-II aminoacyl-tRNA synthetase family. Tetramer of two alpha and two beta subunits.

It is found in the cytoplasm. The catalysed reaction is tRNA(Gly) + glycine + ATP = glycyl-tRNA(Gly) + AMP + diphosphate. This is Glycine--tRNA ligase alpha subunit (glyQ) from Vibrio cholerae serotype O1 (strain ATCC 39315 / El Tor Inaba N16961).